A 172-amino-acid chain; its full sequence is Adenine phosphoribosyltransferase (172 aa).

Belongs to the purine/pyrimidine phosphoribosyltransferase family. In terms of assembly, homodimer.

The protein resides in the cytoplasm. The enzyme catalyses AMP + diphosphate = 5-phospho-alpha-D-ribose 1-diphosphate + adenine. Its pathway is purine metabolism; AMP biosynthesis via salvage pathway; AMP from adenine: step 1/1. Functionally, catalyzes a salvage reaction resulting in the formation of AMP, that is energically less costly than de novo synthesis. This Roseiflexus castenholzii (strain DSM 13941 / HLO8) protein is Adenine phosphoribosyltransferase.